Here is a 369-residue protein sequence, read N- to C-terminus: Biglycan (369 aa).

Positions 1 to 16 are cleaved as a signal peptide; the sequence is MCPLWLLTLLLALSQA. The propeptide occupies 17-37; the sequence is LPFEQKGFWDFTLDDGLLMMN. 2 O-linked (Xyl...) (glycosaminoglycan) serine glycosylation sites follow: Ser42 and Ser48. 2 cysteine pairs are disulfide-bonded: Cys64–Cys70 and Cys68–Cys77. LRR repeat units follow at residues 83 to 103, 104 to 127, 128 to 151, 152 to 172, 173 to 196, 197 to 221, 222 to 242, 243 to 266, 267 to 290, 291 to 313, 314 to 343, and 344 to 369; these read KTVP…NNDI, SELR…NNKI, SKIH…KNHL, VEIP…DNRI, RKVP…GNPL, ENSG…EAKL, TGIP…HNKI, QAIE…HNQI, RMIE…NNKL, SRVP…SNNI, TKVG…NNPV, and PYWE…NYKK. Asn271 and Asn312 each carry an N-linked (GlcNAc...) asparagine glycan. Cysteines 322 and 355 form a disulfide.

This sequence belongs to the small leucine-rich proteoglycan (SLRP) family. SLRP class I subfamily. Post-translationally, the two attached glycosaminoglycan chains can be either chondroitin sulfate or dermatan sulfate. Found in several connective tissues, especially in articular cartilages.

It is found in the secreted. The protein localises to the extracellular space. The protein resides in the extracellular matrix. In terms of biological role, may be involved in collagen fiber assembly. The sequence is that of Biglycan (Bgn) from Mus musculus (Mouse).